Consider the following 380-residue polypeptide: MAPNIRKSHPLLKMVNNSLIDLPTPSNISAWWNFGSLLGICLMTQILTGLLLAMHYTADTNLAFSSVSHTCRNVQYGWLIRNLHANGASLFFICIYLHIGRGIYYGSYLYKETWNTGIILLLTLMATAFVGYVLPWGQMSFWGATVITNLFSAIPYIGQTLVEWAWGGFSVDNPTLTRFFALHFLLPFLIAGLTLIHLTFLHESGSNNPLGITSNCDKIPFHPYFSSKDILGFMLLYFLLTTLALLSPNLLGDPENFTPANPLVTPPHIKPEWYFLFAYAILRSIPNKLGGVLALAASILILFLSPFLHKSKQRTMTFRPLSQALFWLLVTNLFILTWIGSQPVEHPFIIIGQLASLSYFTILLILLPLTGALENKILNY.

The next 4 membrane-spanning stretches (helical) occupy residues F34–M54, W78–I99, W114–L134, and F179–T199. Residues H84 and H98 each coordinate heme b. Heme b is bound by residues H183 and H197. H202 is a binding site for a ubiquinone. The next 4 helical transmembrane spans lie at S227–S247, L289–H309, L321–S341, and F348–P368.

This sequence belongs to the cytochrome b family. As to quaternary structure, the cytochrome bc1 complex contains 11 subunits: 3 respiratory subunits (MT-CYB, CYC1 and UQCRFS1), 2 core proteins (UQCRC1 and UQCRC2) and 6 low-molecular weight proteins (UQCRH/QCR6, UQCRB/QCR7, UQCRQ/QCR8, UQCR10/QCR9, UQCR11/QCR10 and a cleavage product of UQCRFS1). This cytochrome bc1 complex then forms a dimer. The cofactor is heme b.

The protein resides in the mitochondrion inner membrane. Its function is as follows. Component of the ubiquinol-cytochrome c reductase complex (complex III or cytochrome b-c1 complex) that is part of the mitochondrial respiratory chain. The b-c1 complex mediates electron transfer from ubiquinol to cytochrome c. Contributes to the generation of a proton gradient across the mitochondrial membrane that is then used for ATP synthesis. This is Cytochrome b (MT-CYB) from Phalcoboenus australis (Striated caracara).